A 245-amino-acid chain; its full sequence is 1-(5-phosphoribosyl)-5-[(5-phosphoribosylamino)methylideneamino] imidazole-4-carboxamide isomerase (245 aa).

The Proton acceptor role is filled by aspartate 7. The active-site Proton donor is the aspartate 129.

Belongs to the HisA/HisF family.

The protein resides in the cytoplasm. The catalysed reaction is 1-(5-phospho-beta-D-ribosyl)-5-[(5-phospho-beta-D-ribosylamino)methylideneamino]imidazole-4-carboxamide = 5-[(5-phospho-1-deoxy-D-ribulos-1-ylimino)methylamino]-1-(5-phospho-beta-D-ribosyl)imidazole-4-carboxamide. The protein operates within amino-acid biosynthesis; L-histidine biosynthesis; L-histidine from 5-phospho-alpha-D-ribose 1-diphosphate: step 4/9. The protein is 1-(5-phosphoribosyl)-5-[(5-phosphoribosylamino)methylideneamino] imidazole-4-carboxamide isomerase of Salmonella enteritidis PT4 (strain P125109).